A 52-amino-acid polypeptide reads, in one-letter code: uncharacterized protein (52 aa).

This is an uncharacterized protein from Dictyostelium discoideum (Social amoeba).